Here is a 173-residue protein sequence, read N- to C-terminus: MKKQIIYPDFITRIFSTALDLSLVAFIAIPISQFCFFNLLWLFFHDYFLSIKINIHNSNEMFNSIMSQEFYEYLKLGNFNKYILFNILIFATNILVICSYFITFWYYKGTTLSKMFLRMKIVDAVTLNRPTLKQLIKRFLAYITFPIGIFFILFSSKKQALHDRIAGTVVIKS.

The next 3 membrane-spanning stretches (helical) occupy residues 24-44 (VAFI…WLFF), 82-102 (YILF…SYFI), and 135-155 (LIKR…ILFS).

Its subcellular location is the cell membrane. This is an uncharacterized protein from Rickettsia prowazekii (strain Madrid E).